Here is a 131-residue protein sequence, read N- to C-terminus: Ribosome-binding factor A (131 aa).

This sequence belongs to the RbfA family. As to quaternary structure, monomer. Binds 30S ribosomal subunits, but not 50S ribosomal subunits or 70S ribosomes.

Its subcellular location is the cytoplasm. One of several proteins that assist in the late maturation steps of the functional core of the 30S ribosomal subunit. Associates with free 30S ribosomal subunits (but not with 30S subunits that are part of 70S ribosomes or polysomes). Required for efficient processing of 16S rRNA. May interact with the 5'-terminal helix region of 16S rRNA. In Vibrio vulnificus (strain CMCP6), this protein is Ribosome-binding factor A.